Consider the following 449-residue polypeptide: Clusterin (449 aa).

The signal sequence occupies residues Met-1 to Gly-21. Positions Lys-77–Lys-80 match the Nuclear localization signal motif. Asn-85 and Asn-102 each carry an N-linked (GlcNAc...) asparagine glycan. 5 cysteine pairs are disulfide-bonded: Cys-101/Cys-313, Cys-112/Cys-305, Cys-115/Cys-302, Cys-120/Cys-295, and Cys-128/Cys-285. Residue Ser-132 is modified to Phosphoserine. 5 N-linked (GlcNAc...) asparagine glycosylation sites follow: Asn-144, Asn-291, Asn-328, Asn-354, and Asn-374. Residue Ser-396 is modified to Phosphoserine. The Nuclear localization signal motif lies at Arg-443 to Arg-447.

Belongs to the clusterin family. Antiparallel disulfide-linked heterodimer of an alpha chain and a beta chain. Self-associates and forms higher oligomers. Interacts with a broad range of misfolded proteins, including APP, APOC2 and LYZ. Slightly acidic pH promotes interaction with misfolded proteins. Forms high-molecular weight oligomers upon interaction with misfolded proteins. Interacts with APOA1, LRP2, CLUAP1 and PON1. Interacts with the complement membrane attack complex. Interacts (via alpha chain) with XRCC6. Interacts with SYVN1, COMMD1, BTRC, CUL1 and with ubiquitin and SCF (SKP1-CUL1-F-box protein) E3 ubiquitin-protein ligase complexes. Interacts (via alpha chain) with BAX in stressed cells, where BAX undergoes a conformation change leading to association with the mitochondrial membrane. Does not interact with BAX in unstressed cells. Found in a complex with LTF, CLU, EPPIN and SEMG1. Interacts (immaturely glycosylated pre-secreted form) with HSPA5; this interaction promotes CLU stability and facilitates stress-induced CLU retrotranslocation from the secretory pathway to the mitochondria, thereby reducing stress-induced apoptosis by stabilizing mitochondrial membrane integrity. Interacts with BCL2L1; this interaction releases and activates BAX and promotes cell death. Interacts with TGFBR2 and ACVR1. Interacts (secreted form) with STMN3; this interaction may act as an important modulator during neuronal differentiation. Interacts with VLDLR and LRP8. Post-translationally, proteolytically cleaved on its way through the secretory system, probably within the Golgi lumen. Proteolytic cleavage is not necessary for its chaperone activity. All non-secreted forms are not proteolytically cleaved. Chaperone activity of uncleaved forms is dependent on a non-reducing environment. Polyubiquitinated, leading to proteasomal degradation. Under cellular stress, the intracellular level of cleaved form is reduced due to proteasomal degradation. In terms of processing, heavily N-glycosylated. About 30% of the protein mass is comprised of complex N-linked carbohydrate. Endoplasmic reticulum (ER) stress induces changes in glycosylation status and increases level of hypoglycosylated forms. Core carbohydrates are essential for chaperone activity. Non-secreted forms are hypoglycosylated or unglycosylated.

The protein resides in the secreted. The protein localises to the nucleus. It localises to the cytoplasm. Its subcellular location is the mitochondrion membrane. It is found in the cytosol. The protein resides in the microsome. The protein localises to the endoplasmic reticulum. It localises to the mitochondrion. Its subcellular location is the perinuclear region. It is found in the cytoplasmic vesicle. The protein resides in the secretory vesicle. The protein localises to the chromaffin granule. Its function is as follows. Functions as extracellular chaperone that prevents aggregation of non native proteins. Prevents stress-induced aggregation of blood plasma proteins. Inhibits formation of amyloid fibrils by APP, APOC2, B2M, CALCA, CSN3, SNCA and aggregation-prone LYZ variants (in vitro). Does not require ATP. Maintains partially unfolded proteins in a state appropriate for subsequent refolding by other chaperones, such as HSPA8/HSC70. Does not refold proteins by itself. Binding to cell surface receptors triggers internalization of the chaperone-client complex and subsequent lysosomal or proteasomal degradation. When secreted, protects cells against apoptosis and against cytolysis by complement: inhibits assembly of the complement membrane attack complex (MAC) by preventing polymerization of C9 pore component of the MAC complex. Intracellular forms interact with ubiquitin and SCF (SKP1-CUL1-F-box protein) E3 ubiquitin-protein ligase complexes and promote the ubiquitination and subsequent proteasomal degradation of target proteins. Promotes proteasomal degradation of COMMD1 and IKBKB. Modulates NF-kappa-B transcriptional activity. Following stress, promotes apoptosis. Inhibits apoptosis when associated with the mitochondrial membrane by interference with BAX-dependent release of cytochrome c into the cytoplasm. Plays a role in the regulation of cell proliferation. An intracellular form suppresses stress-induced apoptosis by stabilizing mitochondrial membrane integrity through interaction with HSPA5. Secreted form does not affect caspase or BAX-mediated intrinsic apoptosis and TNF-induced NF-kappa-B-activity. Secreted form act as an important modulator during neuronal differentiation through interaction with STMN3. Plays a role in the clearance of immune complexes that arise during cell injury. The protein is Clusterin (CLU) of Equus caballus (Horse).